Reading from the N-terminus, the 807-residue chain is Leucine-rich repeat-containing protein 41 (807 aa).

The interval 45-54 (ALFELCGRAV) is interaction with Elongin BC complex. A phosphoserine mark is found at Ser-155, Ser-276, and Ser-326. 3 disordered regions span residues 269 to 290 (ASRG…RRPR), 304 to 335 (TRRK…AIGG), and 349 to 403 (ASGT…GSGA). Thr-327 is modified (phosphothreonine). Over residues 352–381 (TKQPSAPAAASASSSTSSKRAPASSASQPK) the composition is skewed to low complexity. The residue at position 368 (Ser-368) is a Phosphoserine. Basic residues predominate over residues 382–396 (PLKRFKRAAGKKGPR). LRR repeat units follow at residues 482-502 (WVSL…IFRL), 513-525 (AGCR…LSDL), 526-550 (FSPL…VLSI), 608-632 (SGSL…LVLQ), 638-661 (NLSL…VLFL), 696-723 (NSTL…VFSE), and 726-747 (SSSL…LLEF).

As to quaternary structure, part of an E3 ubiquitin-protein ligase complex with Elongin BC (ELOB and ELOC), RBX1 and CUL5. Component of a probable ECS(LRRC41) complex which contains CUL5, RNF7/RBX2, Elongin BC and LRRC41. Interacts with CUL5, RNF7, ELOB and ELOC.

It functions in the pathway protein modification; protein ubiquitination. In terms of biological role, probable substrate recognition component of an ECS (Elongin BC-CUL2/5-SOCS-box protein) E3 ubiquitin ligase complex which mediates the ubiquitination and subsequent proteasomal degradation of target proteins. In Mus musculus (Mouse), this protein is Leucine-rich repeat-containing protein 41 (Lrrc41).